Consider the following 146-residue polypeptide: DNA protection during starvation protein 2 (146 aa).

Fe cation is bound by residues histidine 27, aspartate 54, and glutamate 58.

Belongs to the Dps family. In terms of assembly, the 12 subunits form a hollow sphere into which the mineral iron core of up to 500 Fe(3+) can be deposited. Homododecamer.

It is found in the cytoplasm. The enzyme catalyses 2 Fe(2+) + H2O2 + 2 H(+) = 2 Fe(3+) + 2 H2O. In terms of biological role, protects DNA from oxidative damage by sequestering intracellular Fe(2+) ion and storing it in the form of Fe(3+) oxyhydroxide mineral. One hydrogen peroxide oxidizes two Fe(2+) ions, which prevents hydroxyl radical production by the Fenton reaction. It is capable of binding and sequestering Fe(2+) ion. Does not bind DNA. This chain is DNA protection during starvation protein 2 (dps2), found in Bacillus anthracis.